We begin with the raw amino-acid sequence, 59 residues long: Conotoxin ViVB (59 aa).

Residues methionine 1 to valine 22 form the signal peptide. The propeptide occupies glutamine 23 to arginine 46. Glutamine 47 is subject to Pyrrolidone carboxylic acid. Position 58 is a valine amide (valine 58).

In terms of processing, contains 2 disulfide bonds that can be either 'C1-C3, C2-C4' or 'C1-C4, C2-C3', since these disulfide connectivities have been observed for conotoxins with cysteine framework V (for examples, see AC P0DQQ7 and AC P81755). Expressed by the venom duct.

The protein resides in the secreted. The sequence is that of Conotoxin ViVB from Conus virgo (Virgin cone).